A 605-amino-acid polypeptide reads, in one-letter code: MRVKDFTPKLVPTSPGVYLMKDDSGEVLYIGKAKNLRNRITTYFQKQGDSRERIPFLMKKTTTIETILVSNETEALLLENNLIKKHHPKYNVLLKDDKTFFCLAISLTHPWPKIDAIRTKAITSSKRQIIFGPYVSAEACRTLLEVISQWFPLRTCSNREFASRRRPCILYEMKRCLAPCVHLCTHEEYEETLEKAVLFLKGKVSEIIQDLEKSIEKASQEQKFEQAGIYYRTLKLIQQAMEKQHVEKFHFQNIDAIGLYRKYQETVITVLTVRSGKLLGARHFPFSENAQEDTDLLSSFILQYYANQPQTPKEILTPIPLNIPELPYLLNKDTPPQLRSPKTGYGKELLTLAKNNAKVHAETTTQSSSLPYEEMKKILKSPDYPYRIECYDNAHLQGSHGVGVYIVYENDAFSPKSYRTFSISSLAHNDLATFHEVLSRRFSSLTSSLPDMIVIDGGRAQYSQAKKTLKELNLTGIQVVSLAKEASNHSSSLRNEKLFCDTFPQGIQLAPTSKLLQFFQKLRDEAHRFAISKHRRKRYKDLLFPQEKIPGIGEVKRKRLLQKFKSWKQVMKASQGELEAIPGLTKKDIQQLLAKQVEDSKLTED.

In terms of domain architecture, GIY-YIG spans 13 to 92; it reads TSPGVYLMKD…IKKHHPKYNV (80 aa). One can recognise a UVR domain in the interval 205–240; the sequence is SEIIQDLEKSIEKASQEQKFEQAGIYYRTLKLIQQA.

Belongs to the UvrC family. In terms of assembly, interacts with UvrB in an incision complex.

It localises to the cytoplasm. In terms of biological role, the UvrABC repair system catalyzes the recognition and processing of DNA lesions. UvrC both incises the 5' and 3' sides of the lesion. The N-terminal half is responsible for the 3' incision and the C-terminal half is responsible for the 5' incision. This is UvrABC system protein C from Chlamydia caviae (strain ATCC VR-813 / DSM 19441 / 03DC25 / GPIC) (Chlamydophila caviae).